Here is a 117-residue protein sequence, read N- to C-terminus: Ribonuclease P protein component (117 aa).

Belongs to the RnpA family. In terms of assembly, consists of a catalytic RNA component (M1 or rnpB) and a protein subunit.

It carries out the reaction Endonucleolytic cleavage of RNA, removing 5'-extranucleotides from tRNA precursor.. Its function is as follows. RNaseP catalyzes the removal of the 5'-leader sequence from pre-tRNA to produce the mature 5'-terminus. It can also cleave other RNA substrates such as 4.5S RNA. The protein component plays an auxiliary but essential role in vivo by binding to the 5'-leader sequence and broadening the substrate specificity of the ribozyme. This is Ribonuclease P protein component from Nocardioides sp. (strain ATCC BAA-499 / JS614).